The following is a 1630-amino-acid chain: MATFTPLNAASEDLDKEKRTLEIRIEEAVQIYQNALSAQKQGDDNAATKYYDELLNVRILRELPFTVNSNYKKNNALLLLHYLTRKNHGLFLLSKLQSLLSLDPSTDPIPVYRDALLDFAIALACDYNDIELWSFVAELAEKLEMPRIQRFALESSFYTGYEPFDAERVFTNIDDLNPGKLISLQNLYNLLKKLGGIAEPLPQLDLSISSLYTLPSFFPQLPTPSFHRRSINLCPKIKKLQLSHDTLHGFLDLVLYALQINEKKTPTRGFPSTLIIHVHSLNLSTAESHDLESTDSELWSEISDAGPDTNTINTAAKLSEPVYAKDIVPPPSDNLPKPQLLKRPIDDSDVRISKRSRGRDLRTPSESNLFSLIASITSDINEQIQKRFPDATSPFSGESMFREYSSIFEDYHQLLVNFPSEGSIPDLDVSTDSAANGAFSKMILIDLAMHSANRLEHMQVPDGYLLQLLSEVNSLNMVPAELATFFVESMLRPRKLEPPFYLQQCWGKIFKKKFTTICERIESTLHELVKASLQTPEVFNISQSLFELFLDDYFLALKFSSNDQKDDNVSEIPTESLEYKKLRCLRWKSLTEQVVELQPSCKSSSQRHLIIRNSWARNLLLRLTGCSSEAIVENFKQLRCLLQENSDSLELLNSQCMADLSVQVVDFELSKLQTVEFFNTLFMNTKNLDFNAVIKNLEPVLSPENKFAEDPQAKFISQFLEKTSTEFQIHLWYLLYQAYSSAHRPYNSLLCAFQSLKIILIRLCSSSFSIQDAGRRQAELLGMLNFSSNLFRIIWQKLHEQPDILSPCNEMTVIDCIRIILIYLRTFAIYVGIDEDISDQRIPKPSNPEFDSYAQTVKDSLMSGWCIFYTLFAHLLHYDFIKADAQKLLPQILTAIHSQYSFRGYCSSSNQSFLELSQTECQRLDAWENENEILQCVCCRFNLIIGSEYYVPQSHQSDSVNLTSNDAIKIIPFILGFAVKRSHGWVMPRSDQKNALEIICKVIRFPGENNADVYFNKCAIKEFLERDISPQLTKMLLKSNDILGLREIGSKVVDDRVRGLYYAQSQVLFGYYRSRLKGSRCINDLLVIIKYFLLDLYLNPRRQDSWYTCSSVFSSLADEELGWSAEQICLADDVINEYRRKAILCNLMALSLPFTQDKLFKANVYFDFAMNLYASARPPLEMAAFLPSETRVFSGASGLYNLSMKPIEVSKVIALAADYFGMSAELSNDWRALYMLGKACRKCGDMENALVHFEAAAALAPTKSGSGSQQALLIEPHYALLSNLSKAAIEGSVEIVQILSYLRRIRHPPKDSGSLLEVKNEDVNIYKRNALLFILKALAEMRILDKQSWHHRPTYRIAKIMEHLGNVQQAKEEMETLFSYKTSGKSLLNIWRTPNERPGRHFYYGATYSRYLLSLFYKTNDKVNFLQFLKRFRRSSSTIYEHRQIWLDIMIKYLEDLRLQHSVKETQINDLPLVEFKYVYKEISLLDEQKLSLLHQVYEIRKLNNGLYPTIKVDDFLIDCFMSLYNEVKSSISPLDANIPNSPSTITAKPLNDEKAINNENSVKQKTVITRKDVVSKVLALFRPHRETYYRETQNKILQKLASTSSSLVRSFTEDSSQAGESPGIHEEIQ.

The stretch at 8–42 is one TPR 1 repeat; that stretch reads NAASEDLDKEKRTLEIRIEEAVQIYQNALSAQKQG. Residues 325-347 form a disordered region; that stretch reads KDIVPPPSDNLPKPQLLKRPIDD. The stretch at 1230 to 1263 is one TPR 2 repeat; the sequence is WRALYMLGKACRKCGDMENALVHFEAAAALAPTK.

This sequence belongs to the HIR3 family. Interacts with hip1 and slm9.

It is found in the nucleus. Functionally, has a role in a nucleosome assembly pathway that is required for the integrity of heterochromatin and proper chromosome segregation. Required for transcriptional silencing in the outer repeat (otr) region of centromeric repeats and the Tf2 long terminal repeat retrotransposons. The chain is Histone transcription regulator 3 homolog (hip3) from Schizosaccharomyces pombe (strain 972 / ATCC 24843) (Fission yeast).